We begin with the raw amino-acid sequence, 293 residues long: N-acetylneuraminate lyase (293 aa).

Aceneuramate is bound by residues S48 and S49. Y137 (proton donor) is an active-site residue. Residue K165 is the Schiff-base intermediate with substrate of the active site. Aceneuramate contacts are provided by T167, G189, D191, E192, and S208.

Belongs to the DapA family. NanA subfamily. As to quaternary structure, homotetramer.

It localises to the cytoplasm. The catalysed reaction is aceneuramate = aldehydo-N-acetyl-D-mannosamine + pyruvate. The protein operates within amino-sugar metabolism; N-acetylneuraminate degradation; D-fructose 6-phosphate from N-acetylneuraminate: step 1/5. In terms of biological role, catalyzes the reversible aldol cleavage of N-acetylneuraminic acid (sialic acid; Neu5Ac) to form pyruvate and N-acetylmannosamine (ManNAc) via a Schiff base intermediate. This is N-acetylneuraminate lyase from Staphylococcus aureus (strain MRSA252).